A 338-amino-acid chain; its full sequence is Phenylalanine--tRNA ligase alpha subunit (338 aa).

Glu-252 contributes to the Mg(2+) binding site.

It belongs to the class-II aminoacyl-tRNA synthetase family. Phe-tRNA synthetase alpha subunit type 1 subfamily. As to quaternary structure, tetramer of two alpha and two beta subunits. It depends on Mg(2+) as a cofactor.

The protein localises to the cytoplasm. It catalyses the reaction tRNA(Phe) + L-phenylalanine + ATP = L-phenylalanyl-tRNA(Phe) + AMP + diphosphate + H(+). The sequence is that of Phenylalanine--tRNA ligase alpha subunit from Pseudomonas aeruginosa (strain UCBPP-PA14).